A 330-amino-acid chain; its full sequence is Uroporphyrinogen decarboxylase (330 aa).

Residues 10 to 14, Phe29, Ser59, Asp60, Tyr137, Ser192, and His307 contribute to the substrate site; that span reads RQAGR.

The protein belongs to the uroporphyrinogen decarboxylase family. As to quaternary structure, homodimer.

It localises to the plastid. Its subcellular location is the chloroplast. The enzyme catalyses uroporphyrinogen III + 4 H(+) = coproporphyrinogen III + 4 CO2. It participates in porphyrin-containing compound metabolism; protoporphyrin-IX biosynthesis; coproporphyrinogen-III from 5-aminolevulinate: step 4/4. Catalyzes the decarboxylation of four acetate groups of uroporphyrinogen-III to yield coproporphyrinogen-III. The protein is Uroporphyrinogen decarboxylase (DCUP) of Hordeum vulgare (Barley).